A 210-amino-acid chain; its full sequence is Large ribosomal subunit protein uL4 (210 aa).

Residues 46–77 are disordered; it reads QGTHKSKERGEIAGSTKKIKKQKGTGTARAGS.

The protein belongs to the universal ribosomal protein uL4 family. Part of the 50S ribosomal subunit.

One of the primary rRNA binding proteins, this protein initially binds near the 5'-end of the 23S rRNA. It is important during the early stages of 50S assembly. It makes multiple contacts with different domains of the 23S rRNA in the assembled 50S subunit and ribosome. Functionally, forms part of the polypeptide exit tunnel. The protein is Large ribosomal subunit protein uL4 of Amoebophilus asiaticus (strain 5a2).